The chain runs to 143 residues: NADH-quinone oxidoreductase subunit A (143 aa).

Helical transmembrane passes span 8–28 (FGNV…GYLT), 63–83 (FYVV…LFPW), and 93–113 (FALV…VYAW).

The protein belongs to the complex I subunit 3 family. NDH-1 is composed of 14 different subunits. Subunits NuoA, H, J, K, L, M, N constitute the membrane sector of the complex.

It is found in the cell inner membrane. It catalyses the reaction a quinone + NADH + 5 H(+)(in) = a quinol + NAD(+) + 4 H(+)(out). Functionally, NDH-1 shuttles electrons from NADH, via FMN and iron-sulfur (Fe-S) centers, to quinones in the respiratory chain. The immediate electron acceptor for the enzyme in this species is believed to be a menaquinone. Couples the redox reaction to proton translocation (for every two electrons transferred, four hydrogen ions are translocated across the cytoplasmic membrane), and thus conserves the redox energy in a proton gradient. The chain is NADH-quinone oxidoreductase subunit A from Chlorobium phaeovibrioides (strain DSM 265 / 1930) (Prosthecochloris vibrioformis (strain DSM 265)).